The sequence spans 127 residues: MORF4 family-associated protein 1-like 1 (127 aa).

Residues 87-118 (GEADERVSELCEKAEEKAKEIAKMAEMLVELV) are a coiled coil.

This sequence belongs to the MORF4 family-associated protein family.

This Homo sapiens (Human) protein is MORF4 family-associated protein 1-like 1 (MRFAP1L1).